A 317-amino-acid polypeptide reads, in one-letter code: Heme A synthase (317 aa).

Over 1 to 6 (MQRSLK) the chain is Cytoplasmic. The chain crosses the membrane as a helical span at residues 7–27 (WFASATTLAMLFVLIGGALVT). The Extracellular portion of the chain corresponds to 28 to 62 (KTGSGMGCGRSWPLCNGQWVPDHITPELIIELSHR). The cysteines at positions 35 and 42 are disulfide-linked. Residue Glu58 is part of the active site. His61 lines the heme o pocket. Residues 63 to 83 (LVSGLAGIMVLILSIWAWRAI) form a helical membrane-spanning segment. The Cytoplasmic segment spans residues 84-90 (GHVQETK). Residues 91–111 (FLAVISFVFLVLQGLIGAAAV) traverse the membrane as a helical segment. Topologically, residues 112–121 (VWGQSDFVLA) are extracellular. The chain crosses the membrane as a helical span at residues 122 to 142 (LHFGISLISFAAVLLLTLLIF). His123 lines the heme o pocket. Topologically, residues 143–159 (EIDKTFSAASLSLDGKM) are cytoplasmic. The chain crosses the membrane as a helical span at residues 160-180 (RFHIYGITIYSYIVVYTGALV). At 181-211 (RHTNASLACPSWPLCAKTRLLPVQFHEWVQM) the chain is on the extracellular side. A disulfide bridge connects residues Cys189 and Cys195. Residues 212 to 232 (GHRLAAAVIIIWIAAAAIHAV) traverse the membrane as a helical segment. His213 contributes to the heme b binding site. Topologically, residues 233 to 243 (RHYRRQPVIYY) are cytoplasmic. A helical transmembrane segment spans residues 244-264 (GWLIALLLVLAQMTTGALVVF). At 265–270 (TQLNLY) the chain is on the extracellular side. Residues 271 to 291 (IALAHAFFISCLFGVLSYLLL) traverse the membrane as a helical segment. Residue His275 participates in heme b binding. Residues 292-317 (LALRTRRAPVKAADHSAGEAAPATLK) are Cytoplasmic-facing.

It belongs to the COX15/CtaA family. Type 1 subfamily. In terms of assembly, interacts with CtaB. It depends on heme b as a cofactor.

The protein localises to the cell membrane. The catalysed reaction is Fe(II)-heme o + 2 A + H2O = Fe(II)-heme a + 2 AH2. The protein operates within porphyrin-containing compound metabolism; heme A biosynthesis; heme A from heme O: step 1/1. Catalyzes the conversion of heme O to heme A by two successive hydroxylations of the methyl group at C8. The first hydroxylation forms heme I, the second hydroxylation results in an unstable dihydroxymethyl group, which spontaneously dehydrates, resulting in the formyl group of heme A. The chain is Heme A synthase from Geobacillus kaustophilus (strain HTA426).